The sequence spans 276 residues: Rhomboid protease GlpG (276 aa).

The next 6 membrane-spanning stretches (helical) occupy residues 94-114, 142-162, 169-189, 192-212, 229-249, and 252-272; these read GPFT…QNLL, AFMH…WYLG, IGSG…GFVQ, FSGP…GYVW, LILF…GMAI, and GAHV…TLHG. The active-site Nucleophile is serine 201. The active site involves histidine 254.

Belongs to the peptidase S54 family.

The protein resides in the cell inner membrane. The catalysed reaction is Cleaves type-1 transmembrane domains using a catalytic dyad composed of serine and histidine that are contributed by different transmembrane domains.. In terms of biological role, rhomboid-type serine protease that catalyzes intramembrane proteolysis. The chain is Rhomboid protease GlpG from Klebsiella pneumoniae (strain 342).